The chain runs to 129 residues: Large ribosomal subunit protein uL22 (129 aa).

The protein belongs to the universal ribosomal protein uL22 family. As to quaternary structure, part of the 50S ribosomal subunit.

Functionally, this protein binds specifically to 23S rRNA; its binding is stimulated by other ribosomal proteins, e.g. L4, L17, and L20. It is important during the early stages of 50S assembly. It makes multiple contacts with different domains of the 23S rRNA in the assembled 50S subunit and ribosome. Its function is as follows. The globular domain of the protein is located near the polypeptide exit tunnel on the outside of the subunit, while an extended beta-hairpin is found that lines the wall of the exit tunnel in the center of the 70S ribosome. This chain is Large ribosomal subunit protein uL22, found in Rhizobium meliloti (strain 1021) (Ensifer meliloti).